Consider the following 472-residue polypeptide: Succinate-semialdehyde dehydrogenase [NADP(+)] (472 aa).

NADP(+)-binding positions include 134 to 135, 158 to 161, and 210 to 211; these read WN, KHAS, and GS. E232 functions as the Proton acceptor in the catalytic mechanism. L233 contacts NADP(+). Residue C266 is the Nucleophile of the active site. E363 contributes to the NADP(+) binding site.

This sequence belongs to the aldehyde dehydrogenase family.

The catalysed reaction is succinate semialdehyde + NADP(+) + H2O = succinate + NADPH + 2 H(+). Its function is as follows. Catalyzes the NADP(+)-dependent oxidation of succinate semialdehyde to succinate. It is believed to be the main source of succinate semialdehyde dehydrogenase activity in Mycobacterium. The chain is Succinate-semialdehyde dehydrogenase [NADP(+)] (gabD1) from Mycolicibacterium paratuberculosis (strain ATCC BAA-968 / K-10) (Mycobacterium paratuberculosis).